The sequence spans 34 residues: Kappa-theraphotoxin-Sc1a (34 aa).

3 cysteine pairs are disulfide-bonded: Cys2-Cys16, Cys9-Cys21, and Cys15-Cys28. Ile34 is modified (isoleucine amide).

Belongs to the neurotoxin 10 (Hwtx-1) family. 57 (ScTx1) subfamily. In terms of tissue distribution, expressed by the venom gland.

It is found in the secreted. In terms of biological role, acts as a gating-modifier to inhibit voltage-gated potassium channels. It inhibits delayed Kv2.1/KCNB1 (IC(50) is 12.7 nM), Kv2.1/Kv9.3 (IC(50) is 7.2 nM) (KCNB1/KCNS3), Kv2.2/KCNB2 (IC(50) is 21.4 nM), and transient Kv4.2/KCND2 (IC(50) is 1.2 nM) channels. In Stromatopelma calceatum (Featherleg baboon tarantula), this protein is Kappa-theraphotoxin-Sc1a.